The sequence spans 478 residues: Cytochrome c-552 (478 aa).

The N-terminal stretch at 1 to 26 (MARKTLRARRFFSLIFPFFFITSVYA) is a signal peptide. His-94 serves as a coordination point for heme c. Residues Cys-122, Cys-125, and Lys-126 each coordinate heme. 6 residues coordinate heme c: Cys-160, Cys-163, His-164, Cys-209, Cys-212, and His-213. Ca(2+) contacts are provided by Glu-215, Tyr-216, Lys-261, and Gln-263. Residue Tyr-216 coordinates substrate. Residue His-264 participates in substrate binding. Residues His-275, Cys-282, Cys-285, His-286, His-301, Cys-314, Cys-317, His-318, and His-393 each coordinate heme c.

The protein belongs to the cytochrome c-552 family. Requires Ca(2+) as cofactor. It depends on heme c as a cofactor.

It localises to the periplasm. The enzyme catalyses 6 Fe(III)-[cytochrome c] + NH4(+) + 2 H2O = 6 Fe(II)-[cytochrome c] + nitrite + 8 H(+). It functions in the pathway nitrogen metabolism; nitrate reduction (assimilation). Functionally, catalyzes the reduction of nitrite to ammonia, consuming six electrons in the process. This is Cytochrome c-552 from Salmonella gallinarum (strain 287/91 / NCTC 13346).